A 496-amino-acid chain; its full sequence is Glycerol kinase (496 aa).

T12 is an ADP binding site. The ATP site is built by T12, T13, and S14. T12 is a sn-glycerol 3-phosphate binding site. R16 contributes to the ADP binding site. The sn-glycerol 3-phosphate site is built by R82, E83, and Y134. Glycerol contacts are provided by R82, E83, and Y134. The residue at position 230 (H230) is a Phosphohistidine; by HPr. D244 lines the sn-glycerol 3-phosphate pocket. Glycerol contacts are provided by D244 and Q245. Residues T266 and G309 each contribute to the ADP site. ATP contacts are provided by T266, G309, Q313, and G410. ADP is bound by residues G410 and N414.

The protein belongs to the FGGY kinase family. Homotetramer and homodimer (in equilibrium). The phosphoenolpyruvate-dependent sugar phosphotransferase system (PTS), including enzyme I, and histidine-containing protein (HPr) are required for the phosphorylation, which leads to the activation of the enzyme.

It carries out the reaction glycerol + ATP = sn-glycerol 3-phosphate + ADP + H(+). It functions in the pathway polyol metabolism; glycerol degradation via glycerol kinase pathway; sn-glycerol 3-phosphate from glycerol: step 1/1. Activated by phosphorylation and inhibited by fructose 1,6-bisphosphate (FBP). Its function is as follows. Key enzyme in the regulation of glycerol uptake and metabolism. Catalyzes the phosphorylation of glycerol to yield sn-glycerol 3-phosphate. The chain is Glycerol kinase from Bacillus anthracis (strain A0248).